The primary structure comprises 535 residues: Succinate-semialdehyde dehydrogenase, mitochondrial (535 aa).

Residues 1–47 (MATCIWLRSCGARRLGSTFPGCRLRPRAGGLVPASGPAPGPAQLRCY) constitute a mitochondrion transit peptide. Residue Lys-126 is modified to N6-acetyllysine; alternate. Position 126 is an N6-succinyllysine; alternate (Lys-126). Lys-135 and Lys-184 each carry N6-succinyllysine. Residues Arg-213 and 228–231 (KPAE) each bind NAD(+). Residue Arg-213 participates in substrate binding. Lys-265 carries the post-translational modification N6-acetyllysine; alternate. Lys-265 bears the N6-succinyllysine; alternate mark. Residue 284-289 (GSTTTG) participates in NAD(+) binding. The active-site Proton acceptor is Glu-306. Arg-334 is a binding site for substrate. Residue Cys-340 is the Nucleophile of the active site. A disulfide bridge links Cys-340 with Cys-342. At Lys-365 the chain carries N6-acetyllysine. At Lys-402 the chain carries N6-succinyllysine. Lys-411 carries the N6-acetyllysine modification. Ser-498 is a substrate binding site. Ser-499 carries the post-translational modification Phosphoserine.

This sequence belongs to the aldehyde dehydrogenase family. As to quaternary structure, homotetramer.

It is found in the mitochondrion. The catalysed reaction is succinate semialdehyde + NAD(+) + H2O = succinate + NADH + 2 H(+). Its pathway is amino-acid degradation; 4-aminobutanoate degradation. With respect to regulation, redox-regulated. Inhibited under oxydizing conditions. Functionally, catalyzes one step in the degradation of the inhibitory neurotransmitter gamma-aminobutyric acid (GABA). The chain is Succinate-semialdehyde dehydrogenase, mitochondrial (ALDH5A1) from Pan troglodytes (Chimpanzee).